A 171-amino-acid chain; its full sequence is Laminin subunit beta-1 (171 aa).

The first 29 residues, Met-1–Gly-29, serve as a signal peptide directing secretion. 5 cysteine pairs are disulfide-bonded: Cys-59–Cys-69, Cys-72–Cys-81, Cys-84–Cys-100, Cys-103–Cys-118, and Cys-105–Cys-128. Laminin EGF-like domains lie at Thr-66–Arg-102, Cys-103–Lys-160, and Cys-161–Ser-171. Asn-130 is a glycosylation site (N-linked (GlcNAc...) asparagine). 2 disulfide bridges follow: Cys-131–Cys-140 and Cys-143–Cys-158.

As to quaternary structure, laminin is a complex glycoprotein, consisting of three different polypeptide chains (alpha, beta, gamma), which are bound to each other by disulfide bonds into a cross-shaped molecule comprising one long and three short arms with globules at each end.

It localises to the secreted. Its subcellular location is the extracellular space. The protein localises to the extracellular matrix. The protein resides in the basement membrane. Functionally, binding to cells via a high affinity receptor, laminin is thought to mediate the attachment, migration and organization of cells into tissues during embryonic development by interacting with other extracellular matrix components. This is Laminin subunit beta-1 from Hydra vulgaris (Hydra).